A 220-amino-acid polypeptide reads, in one-letter code: Ribosomal RNA large subunit methyltransferase E (220 aa).

Residues Gly60, Trp62, Asp92, Asp108, and Asp133 each coordinate S-adenosyl-L-methionine. The Proton acceptor role is filled by Lys173.

This sequence belongs to the class I-like SAM-binding methyltransferase superfamily. RNA methyltransferase RlmE family.

It is found in the cytoplasm. It carries out the reaction uridine(2552) in 23S rRNA + S-adenosyl-L-methionine = 2'-O-methyluridine(2552) in 23S rRNA + S-adenosyl-L-homocysteine + H(+). Functionally, specifically methylates the uridine in position 2552 of 23S rRNA at the 2'-O position of the ribose in the fully assembled 50S ribosomal subunit. In Burkholderia thailandensis (strain ATCC 700388 / DSM 13276 / CCUG 48851 / CIP 106301 / E264), this protein is Ribosomal RNA large subunit methyltransferase E.